Consider the following 369-residue polypeptide: Aminomethyltransferase (369 aa).

It belongs to the GcvT family. The glycine cleavage system is composed of four proteins: P, T, L and H.

The enzyme catalyses N(6)-[(R)-S(8)-aminomethyldihydrolipoyl]-L-lysyl-[protein] + (6S)-5,6,7,8-tetrahydrofolate = N(6)-[(R)-dihydrolipoyl]-L-lysyl-[protein] + (6R)-5,10-methylene-5,6,7,8-tetrahydrofolate + NH4(+). The glycine cleavage system catalyzes the degradation of glycine. This chain is Aminomethyltransferase, found in Rippkaea orientalis (strain PCC 8801 / RF-1) (Cyanothece sp. (strain PCC 8801)).